The chain runs to 124 residues: MARVKRGVTTRARHKKVIKLAKGYRGRSKNCYRIALQRVEKALQYAYRDRRNRKRFFRSLWIMRINAAVRQHGLLYSDFIHGLSLANVTLNRKVLADMAVNHKDHFKQIVDLIKEALNKSRVAQ.

The protein belongs to the bacterial ribosomal protein bL20 family.

Its function is as follows. Binds directly to 23S ribosomal RNA and is necessary for the in vitro assembly process of the 50S ribosomal subunit. It is not involved in the protein synthesizing functions of that subunit. The sequence is that of Large ribosomal subunit protein bL20 from Ehrlichia chaffeensis (strain ATCC CRL-10679 / Arkansas).